Consider the following 402-residue polypeptide: Dual-specificity RNA methyltransferase RlmN (402 aa).

Residue Glu124 is the Proton acceptor of the active site. The 241-residue stretch at 130 to 370 (DADRGTLCVS…APVRTPRGRD (241 aa)) folds into the Radical SAM core domain. Cys137 and Cys375 form a disulfide bridge. [4Fe-4S] cluster-binding residues include Cys144, Cys148, and Cys151. S-adenosyl-L-methionine contacts are provided by residues 199–200 (GE), Ser231, 253–255 (SLH), and Asn332. The active-site S-methylcysteine intermediate is Cys375.

This sequence belongs to the radical SAM superfamily. RlmN family. Requires [4Fe-4S] cluster as cofactor.

It localises to the cytoplasm. It carries out the reaction adenosine(2503) in 23S rRNA + 2 reduced [2Fe-2S]-[ferredoxin] + 2 S-adenosyl-L-methionine = 2-methyladenosine(2503) in 23S rRNA + 5'-deoxyadenosine + L-methionine + 2 oxidized [2Fe-2S]-[ferredoxin] + S-adenosyl-L-homocysteine. The enzyme catalyses adenosine(37) in tRNA + 2 reduced [2Fe-2S]-[ferredoxin] + 2 S-adenosyl-L-methionine = 2-methyladenosine(37) in tRNA + 5'-deoxyadenosine + L-methionine + 2 oxidized [2Fe-2S]-[ferredoxin] + S-adenosyl-L-homocysteine. Specifically methylates position 2 of adenine 2503 in 23S rRNA and position 2 of adenine 37 in tRNAs. m2A2503 modification seems to play a crucial role in the proofreading step occurring at the peptidyl transferase center and thus would serve to optimize ribosomal fidelity. The protein is Dual-specificity RNA methyltransferase RlmN of Rhizorhabdus wittichii (strain DSM 6014 / CCUG 31198 / JCM 15750 / NBRC 105917 / EY 4224 / RW1) (Sphingomonas wittichii).